The sequence spans 453 residues: MKMKYFHHPSGLLPRLLLLLLLTMGAVACTKEDNPDQPTSDEVATVKMSLDDVEMRGGDLYSGEDLIKKVRIFVFREGLNGLWVLDKQKLFASGQSDFQNPFTISAHAGPRQIYVIANEPDALTTKLDKILFKKELEDMQAPDVNEPIVRPFTMTGMATATLNPQGTVQANISLNRIAAKITLDIKQVTPGSDVIKITKVQILRNAKNSRLLEGTNKPTGYWNWANACDLPLTNNGSAQSIIQASAPLYVYENIGSDSDSSGRATQLVVEALYNGIKTRYYAYVNDKTTTANHHYSIRRNHHYKLDGTITKMGEFSSLLLTTTVLPWTVENLDYGFLVPYVAEINPHAVITQDNVVTFENSLSFTVRIKGRDGSRWKATLDNGLEFGFDSGSAIDGAADGTTVYTIKVKALKPNGIGIQRRTNLFFTVDGKKVILDKNINPQPTDIKIIQQGL.

The first 28 residues, Met1–Ala28, serve as a signal peptide directing secretion. A lipid anchor (N-palmitoyl cysteine) is attached at Cys29. Cys29 carries S-diacylglycerol cysteine lipidation. A propeptide spanning residues Cys29–Arg56 is cleaved from the precursor.

Belongs to the bacteroidetes fimbrillin superfamily. FimA/Mfa1 family. In terms of assembly, fimbriae are composed of a major, structural subunit and the minor components FimC, FimD and FimE. Identified in a complex composed of FimC, FimD and FimE (in vitro). The complex interacts with host extracellular matrix proteins, including fibronectin and type I collagen. Interacts with host CXCR4.

It localises to the fimbrium. The protein resides in the cell outer membrane. Functionally, minor component of fimbriae. These long, filamentous pili are attached to the cell surface; they mediate biofilm formation, adhesion onto host cells and onto other bacteria that are part of the oral microbiome. They play an important role in invasion of periodontal tissues and are major virulence factors. FimC, FimD and FimE contribute to interaction with host CXCR4 and thereby down-regulate the TLR2-mediated host immune response. This is Major fimbrium subunit FimC from Porphyromonas gingivalis (strain ATCC 33277 / DSM 20709 / CIP 103683 / JCM 12257 / NCTC 11834 / 2561).